We begin with the raw amino-acid sequence, 143 residues long: Putative pre-16S rRNA nuclease (143 aa).

The protein belongs to the YqgF nuclease family.

It localises to the cytoplasm. In terms of biological role, could be a nuclease involved in processing of the 5'-end of pre-16S rRNA. In Marinobacter nauticus (strain ATCC 700491 / DSM 11845 / VT8) (Marinobacter aquaeolei), this protein is Putative pre-16S rRNA nuclease.